The sequence spans 408 residues: Peptidase T (408 aa).

A Zn(2+)-binding site is contributed by H78. D80 is an active-site residue. D140 serves as a coordination point for Zn(2+). E174 serves as the catalytic Proton acceptor. E175, D197, and H379 together coordinate Zn(2+).

This sequence belongs to the peptidase M20B family. It depends on Zn(2+) as a cofactor.

It localises to the cytoplasm. It carries out the reaction Release of the N-terminal residue from a tripeptide.. Cleaves the N-terminal amino acid of tripeptides. This is Peptidase T from Staphylococcus aureus (strain bovine RF122 / ET3-1).